The sequence spans 278 residues: Orotidine 5'-phosphate decarboxylase (278 aa).

K95 functions as the Proton donor in the catalytic mechanism.

Belongs to the OMP decarboxylase family. Type 2 subfamily.

It catalyses the reaction orotidine 5'-phosphate + H(+) = UMP + CO2. It participates in pyrimidine metabolism; UMP biosynthesis via de novo pathway; UMP from orotate: step 2/2. This Corynebacterium glutamicum (strain R) protein is Orotidine 5'-phosphate decarboxylase.